The following is a 307-amino-acid chain: Farnesol kinase, chloroplastic (307 aa).

The transit peptide at Met1–Ala65 directs the protein to the chloroplast. 7 helical membrane-spanning segments follow: residues Val77–Ile97, Ile116–Phe136, Ala137–His157, Gly177–Lys194, Pro197–Gly217, Ile237–Phe257, and Gly265–Ile285.

This sequence belongs to the polyprenol kinase family.

The protein localises to the plastid. Its subcellular location is the chloroplast membrane. The enzyme catalyses (2E,6E)-farnesol + CTP = (2E,6E)-farnesyl phosphate + CDP + H(+). It carries out the reaction (2E,6E)-farnesol + ATP = (2E,6E)-farnesyl phosphate + ADP + H(+). The catalysed reaction is (2E)-geraniol + ATP = (2E)-geranyl phosphate + ADP + H(+). It catalyses the reaction (2E,6E,10E)-geranylgeraniol + ATP = (2E,6E,10E)-geranylgeranyl phosphate + ADP + H(+). In terms of biological role, kinase involved in negative regulation of abscisic acid (ABA) signaling. Substrate preference is farnesol &gt; geraniol &gt; geranylgeraniol, but has no activity with farnesyl phosphate. Can use CTP &gt; ATP &gt; GTP = UTP as phosphoryl donor. The chain is Farnesol kinase, chloroplastic from Arabidopsis thaliana (Mouse-ear cress).